We begin with the raw amino-acid sequence, 187 residues long: MSRPIVISGPSGTGKSTLLKKLFAEYPDSFGFSVSSTTRTPRAGEVNGKDYNFVSVDEFKSMIKNNEFIEWAQFSGNYYGSTVASVKQVSKSGKTCILDIDMQGVKSVKAIPELNARFLFIAPPSVEDLKKRLEGRGTETEESINKRLSAAQAELAYAETGAHDKVIVNDDLDKAYKELKDFIFAEK.

Serine 2 bears the N-acetylserine mark. The Guanylate kinase-like domain maps to 2–184 (SRPIVISGPS…AYKELKDFIF (183 aa)). 9–16 (GPSGTGKS) provides a ligand contact to ATP. Residues serine 35, 39 to 42 (RTPR), tyrosine 51, glutamate 70, 79 to 81 (YGS), and aspartate 101 contribute to the GMP site. A Phosphoserine modification is found at serine 149. Tyrosine 157 is modified (phosphotyrosine).

The protein belongs to the guanylate kinase family. In terms of assembly, monomer.

It catalyses the reaction GMP + ATP = GDP + ADP. In terms of biological role, catalyzes the reversible transfer of the terminal phosphoryl group of ATP to the acceptor molecule GMP. Essential for recycling GMP and indirectly, cGMP. The sequence is that of Guanylate kinase (GUK1) from Saccharomyces cerevisiae (strain ATCC 204508 / S288c) (Baker's yeast).